The chain runs to 87 residues: U18-myrmicitoxin-Mri1a (87 aa).

The signal sequence occupies residues 1–32 (MKNNYNRINTFIVYLMVTFSLISIISITECTP). An EGF-like domain is found at 33–77 (NHDPCPPQYAEALCLNGGTCFSVTIMGSDNYNCICAPGFRGWRCQ). 3 cysteine pairs are disulfide-bonded: cysteine 37-cysteine 52, cysteine 46-cysteine 65, and cysteine 67-cysteine 76.

Post-translationally, O-glycosylated. In terms of tissue distribution, expressed by the venom gland.

The protein resides in the secreted. This is U18-myrmicitoxin-Mri1a from Manica rubida (European giant red ant).